The chain runs to 1165 residues: Peroxisomal ATPase PEX6 (1165 aa).

This sequence belongs to the AAA ATPase family. In terms of assembly, interacts with PEX1; forming the PEX1-PEX6 AAA ATPase complex, which is composed of a heterohexamer formed by a trimer of PEX1-PEX6 dimers.

Its subcellular location is the membrane. The catalysed reaction is ATP + H2O = ADP + phosphate + H(+). Functionally, component of the PEX1-PEX6 AAA ATPase complex involved in peroxisome biosynthesis. The complex acts as a protein dislocase complex that mediates the ATP-dependent extraction of the PEX5 receptor from peroxisomal membranes, an essential step for PEX5 recycling. Specifically recognizes PEX5 monoubiquitinated at 'Cys-6', and pulls it out of the peroxisome lumen through the PEX2-PEX10-PEX12 retrotranslocation channel. Extraction by the PEX1-PEX6 AAA ATPase complex is accompanied by unfolding of the TPR repeats and release of bound cargo from PEX5. This chain is Peroxisomal ATPase PEX6, found in Komagataella pastoris (Yeast).